The chain runs to 159 residues: Protein E6 (159 aa).

2 zinc fingers span residues 35 to 71 (CVYC…CGKC) and 108 to 144 (CYIC…CMQC).

Belongs to the papillomaviridae E6 protein family. In terms of assembly, forms homodimers. Interacts with ubiquitin-protein ligase UBE3A/E6-AP; this interaction stimulates UBE3A ubiquitin activity. Interacts with host TP53 and EP300; this interaction inhibits TP53 activity.

It localises to the host cytoplasm. Its subcellular location is the host nucleus. Functionally, plays a major role in the induction and maintenance of cellular transformation. E6 associates with host UBE3A/E6-AP ubiquitin-protein ligase and modulates its activity. Sequesters tumor suppressor TP53 in the host cytoplasm and modulates its activity by interacting with host EP300 that results in the reduction of TP53 acetylation and activation. In turn, apoptosis induced by DNA damage is inhibited. E6 also protects host keratinocytes from apoptosis by mediating the degradation of host BAK1. May also inhibit host immune response. The chain is Protein E6 from Homo sapiens (Human).